A 324-amino-acid chain; its full sequence is Probable acrylyl-CoA reductase AcuI (324 aa).

NADP(+) contacts are provided by residues Y41, 156–159, 178–180, R198, L242, I256, S267, and N313; these read SGGV and SGR.

The protein belongs to the zinc-containing alcohol dehydrogenase family. Acrylyl-CoA reductase subfamily. As to quaternary structure, homodimer.

The protein resides in the cytoplasm. It carries out the reaction propanoyl-CoA + NADP(+) = acryloyl-CoA + NADPH + H(+). In terms of biological role, probably catalyzes the NADPH-dependent reduction of acrylyl-CoA to propanoyl-CoA. This is Probable acrylyl-CoA reductase AcuI (acuI) from Escherichia coli (strain K12).